Reading from the N-terminus, the 180-residue chain is Outer-membrane lipoprotein LolB (180 aa).

The N-terminal stretch at 1–16 (MIRRVLLLSLALLLAG) is a signal peptide. A lipid anchor (N-palmitoyl cysteine) is attached at cysteine 17. Cysteine 17 carries the S-diacylglycerol cysteine lipid modification.

This sequence belongs to the LolB family. In terms of assembly, monomer.

The protein localises to the cell outer membrane. Functionally, plays a critical role in the incorporation of lipoproteins in the outer membrane after they are released by the LolA protein. In Chromobacterium violaceum (strain ATCC 12472 / DSM 30191 / JCM 1249 / CCUG 213 / NBRC 12614 / NCIMB 9131 / NCTC 9757 / MK), this protein is Outer-membrane lipoprotein LolB.